The chain runs to 382 residues: Lactaldehyde reductase (382 aa).

NAD(+) is bound by residues D38, N70, 97-98 (GS), 139-143 (TTAGT), N150, K161, and 180-184 (MMDGM). Residues D195, H199, H262, and H276 each coordinate Fe cation.

It belongs to the iron-containing alcohol dehydrogenase family. In terms of assembly, homodimer. Requires Fe cation as cofactor.

The enzyme catalyses (R)-propane-1,2-diol + NAD(+) = (R)-lactaldehyde + NADH + H(+). The catalysed reaction is (S)-propane-1,2-diol + NAD(+) = (S)-lactaldehyde + NADH + H(+). It functions in the pathway carbohydrate degradation; L-fucose degradation. This chain is Lactaldehyde reductase (fucO), found in Escherichia coli O157:H7.